The chain runs to 91 residues: MARTVFCEYLKQEAEGLDFQLYPGELGKRIFDSISKQAWSEWIKKQTMLVNEKKLSMMNAEHRKLLETEMVNFLFEGKEVQIEGYVPVEQK.

Belongs to the Fe(2+)-trafficking protein family.

Could be a mediator in iron transactions between iron acquisition and iron-requiring processes, such as synthesis and/or repair of Fe-S clusters in biosynthetic enzymes. This chain is Probable Fe(2+)-trafficking protein, found in Actinobacillus pleuropneumoniae serotype 5b (strain L20).